The sequence spans 324 residues: Ribose-phosphate pyrophosphokinase (324 aa).

ATP contacts are provided by residues 45 to 47 (NGE) and 104 to 105 (RQ). Residues His138 and Asp178 each coordinate Mg(2+). The active site involves Lys201. Residues Arg203, Asp229, and 233–237 (DTGGT) contribute to the D-ribose 5-phosphate site.

It belongs to the ribose-phosphate pyrophosphokinase family. Class I subfamily. As to quaternary structure, homohexamer. Requires Mg(2+) as cofactor.

The protein resides in the cytoplasm. It catalyses the reaction D-ribose 5-phosphate + ATP = 5-phospho-alpha-D-ribose 1-diphosphate + AMP + H(+). Its pathway is metabolic intermediate biosynthesis; 5-phospho-alpha-D-ribose 1-diphosphate biosynthesis; 5-phospho-alpha-D-ribose 1-diphosphate from D-ribose 5-phosphate (route I): step 1/1. In terms of biological role, involved in the biosynthesis of the central metabolite phospho-alpha-D-ribosyl-1-pyrophosphate (PRPP) via the transfer of pyrophosphoryl group from ATP to 1-hydroxyl of ribose-5-phosphate (Rib-5-P). In Streptomyces coelicolor (strain ATCC BAA-471 / A3(2) / M145), this protein is Ribose-phosphate pyrophosphokinase.